The sequence spans 243 residues: MAGHSKWANIQHRKGRQDAKRGKIFTKLIKEITVAAKMGGGDPAMNPRLRLAIEKGKAESLPKDNIENAIKRGTGQLEGVNYEEARYEGYGIGGVAVMVDCLTDNKTRTVADVRHAFTKHGGNMGTDGCVAFQFKHVGQIVLEPGASEEAVMEAALDAGADDVIPNDDGSIEVLTSPDPKAFEAVKEALEKAGFKPAVAEITMRPEAETELAGDDAAKMQKILDALESLDDVQEVYTNAVLPD.

Belongs to the TACO1 family.

It is found in the cytoplasm. The polypeptide is Probable transcriptional regulatory protein Tbd_2215 (Thiobacillus denitrificans (strain ATCC 25259 / T1)).